Reading from the N-terminus, the 156-residue chain is Small ribosomal subunit protein uS7 (156 aa).

This sequence belongs to the universal ribosomal protein uS7 family. As to quaternary structure, part of the 30S ribosomal subunit. Contacts proteins S9 and S11.

One of the primary rRNA binding proteins, it binds directly to 16S rRNA where it nucleates assembly of the head domain of the 30S subunit. Is located at the subunit interface close to the decoding center, probably blocks exit of the E-site tRNA. This Streptococcus mutans serotype c (strain ATCC 700610 / UA159) protein is Small ribosomal subunit protein uS7.